We begin with the raw amino-acid sequence, 188 residues long: V-type proton ATPase subunit E (188 aa).

Belongs to the V-ATPase E subunit family.

Produces ATP from ADP in the presence of a proton gradient across the membrane. The chain is V-type proton ATPase subunit E from Dictyoglomus thermophilum (strain ATCC 35947 / DSM 3960 / H-6-12).